Here is a 121-residue protein sequence, read N- to C-terminus: Small ribosomal subunit protein uS13 (121 aa).

Positions 94 to 121 (GLPLRGQRTRTNARTRKGPRRAAQSLKK) are disordered.

It belongs to the universal ribosomal protein uS13 family. In terms of assembly, part of the 30S ribosomal subunit. Forms a loose heterodimer with protein S19. Forms two bridges to the 50S subunit in the 70S ribosome.

In terms of biological role, located at the top of the head of the 30S subunit, it contacts several helices of the 16S rRNA. In the 70S ribosome it contacts the 23S rRNA (bridge B1a) and protein L5 of the 50S subunit (bridge B1b), connecting the 2 subunits; these bridges are implicated in subunit movement. Contacts the tRNAs in the A and P-sites. This chain is Small ribosomal subunit protein uS13, found in Paraburkholderia phymatum (strain DSM 17167 / CIP 108236 / LMG 21445 / STM815) (Burkholderia phymatum).